A 218-amino-acid polypeptide reads, in one-letter code: Glutathione S-transferase class-mu 26 kDa isozyme (218 aa).

Residues 2-83 (SPILGYWKIK…YIADKHNMLG (82 aa)) form the GST N-terminal domain. Residues 7–8 (YW), 41–45 (WRNKK), 54–55 (NL), and 67–68 (QS) contribute to the glutathione site. A GST C-terminal domain is found at 85–203 (CPKERAEISM…KSSKYIAWPL (119 aa)). Tyrosine 111 is a binding site for substrate.

Belongs to the GST superfamily. Mu family. Homodimer.

It catalyses the reaction RX + glutathione = an S-substituted glutathione + a halide anion + H(+). In terms of biological role, conjugation of reduced glutathione to a wide number of exogenous and endogenous hydrophobic electrophiles. Functionally, GST isoenzymes appear to play a central role in the parasite detoxification system. Other functions are also suspected including a role in increasing the solubility of haematin in the parasite gut. This chain is Glutathione S-transferase class-mu 26 kDa isozyme, found in Schistosoma japonicum (Blood fluke).